The sequence spans 166 residues: Small ribosomal subunit protein uS5 (166 aa).

One can recognise an S5 DRBM domain in the interval 11–74 (LQEKLIAVNR…EQAKRNLSKV (64 aa)).

The protein belongs to the universal ribosomal protein uS5 family. Part of the 30S ribosomal subunit. Contacts proteins S4 and S8.

Functionally, with S4 and S12 plays an important role in translational accuracy. Located at the back of the 30S subunit body where it stabilizes the conformation of the head with respect to the body. The chain is Small ribosomal subunit protein uS5 from Aeromonas salmonicida (strain A449).